We begin with the raw amino-acid sequence, 144 residues long: Cornifin-A (144 aa).

The interval methionine 1–cysteine 41 is disordered. Residues proline 13–proline 24 are compositionally biased toward low complexity. Repeat copies occupy residues proline 27–alanine 34, proline 35–histidine 42, proline 43–asparagine 49, proline 50–histidine 57, proline 58–histidine 65, proline 66–asparagine 73, proline 74–glutamine 81, proline 82–glutamine 89, proline 90–asparagine 97, proline 98–glutamine 105, proline 106–histidine 113, proline 114–histidine 121, and proline 122–proline 129. Residues proline 27–proline 129 are 13 X 8 AA approximate tandem repeats.

The protein belongs to the cornifin (SPRR) family. Expressed in fetal periderm, hair follicles and in the thickened epidermis of the lip and footpad. Also present in the epithelia of various tissues such as the penis, vagina, forestomach, tongue and esophagus.

Its subcellular location is the cytoplasm. Its function is as follows. Cross-linked envelope protein of keratinocytes. It is a keratinocyte protein that first appears in the cell cytosol, but ultimately becomes cross-linked to membrane proteins by transglutaminase. All that results in the formation of an insoluble envelope beneath the plasma membrane. May participate widely in the construction of cell envelopes in cornifying epithelia characterized by either increased thickness or a requirement for extreme flexibility. In Mus musculus (Mouse), this protein is Cornifin-A (Sprr1a).